A 65-amino-acid chain; its full sequence is Large ribosomal subunit protein uL29 (65 aa).

Belongs to the universal ribosomal protein uL29 family.

The sequence is that of Large ribosomal subunit protein uL29 from Acidovorax ebreus (strain TPSY) (Diaphorobacter sp. (strain TPSY)).